The chain runs to 26 residues: Citropin-2.1.3 (26 aa).

As to expression, expressed by the dorsal and submental skin glands.

Its subcellular location is the secreted. This Ranoidea citropa (Australian Blue Mountains tree frog) protein is Citropin-2.1.3.